Here is a 440-residue protein sequence, read N- to C-terminus: Chromosomal replication initiator protein DnaA (440 aa).

A domain I, interacts with DnaA modulators region spans residues 1–74 (MNPSQILENL…VQSGNKAIIN (74 aa)). The interval 74-99 (NIQAQSTKQSNKSTKIDIAHIQAQST) is domain II. Residues 100-316 (ILNPSFTFES…GIIISLNAYA (217 aa)) form a domain III, AAA+ region region. 4 residues coordinate ATP: Gly146, Gly148, Lys149, and Thr150. A domain IV, binds dsDNA region spans residues 317-440 (TILGQEITLE…KNKILIKSQS (124 aa)).

Belongs to the DnaA family. As to quaternary structure, oligomerizes as a right-handed, spiral filament on DNA at oriC.

The protein resides in the cytoplasm. Functionally, plays an essential role in the initiation and regulation of chromosomal replication. ATP-DnaA binds to the origin of replication (oriC) to initiate formation of the DNA replication initiation complex once per cell cycle. Binds the DnaA box (a 9 base pair repeat at the origin) and separates the double-stranded (ds)DNA. Forms a right-handed helical filament on oriC DNA; dsDNA binds to the exterior of the filament while single-stranded (ss)DNA is stabiized in the filament's interior. The ATP-DnaA-oriC complex binds and stabilizes one strand of the AT-rich DNA unwinding element (DUE), permitting loading of DNA polymerase. After initiation quickly degrades to an ADP-DnaA complex that is not apt for DNA replication. Binds acidic phospholipids. The sequence is that of Chromosomal replication initiator protein DnaA from Campylobacter jejuni subsp. doylei (strain ATCC BAA-1458 / RM4099 / 269.97).